A 166-amino-acid polypeptide reads, in one-letter code: Signal peptidase complex catalytic subunit SEC11 (166 aa).

The Cytoplasmic portion of the chain corresponds to 1–9 (MNIRQQLTQ). The chain crosses the membrane as a helical; Signal-anchor for type II membrane protein span at residues 10-30 (FLSLAYVFTSAFVIWKSLGII). The Lumenal segment spans residues 31–166 (TNSHSPIVVV…MCISTLLTNE (136 aa)). Catalysis depends on charge relay system residues serine 44, histidine 83, and aspartate 108. The tract at residues 152–163 (GMLGLMCISTLL) is C-terminal short (CTS) helix.

Belongs to the peptidase S26B family. Component of the signal peptidase complex (SPC) composed of a catalytic subunit SEC11 and three accessory subunits SPC1, SPC2 and SPC3. The complex induces a local thinning of the ER membrane which is used to measure the length of the signal peptide (SP) h-region of protein substrates. This ensures the selectivity of the complex towards h-regions shorter than 18-20 amino acids. SPC associates with the translocon complex.

Its subcellular location is the endoplasmic reticulum membrane. It catalyses the reaction Cleavage of hydrophobic, N-terminal signal or leader sequences from secreted and periplasmic proteins.. Functionally, catalytic component of the signal peptidase complex (SPC) which catalyzes the cleavage of N-terminal signal sequences from nascent proteins as they are translocated into the lumen of the endoplasmic reticulum. Specifically cleaves N-terminal signal peptides that contain a hydrophobic alpha-helix (h-region) shorter than 18-20 amino acids. The protein is Signal peptidase complex catalytic subunit SEC11 (SEC11) of Scheffersomyces stipitis (strain ATCC 58785 / CBS 6054 / NBRC 10063 / NRRL Y-11545) (Yeast).